The sequence spans 221 residues: Tumor protein p53-inducible nuclear protein 2 (221 aa).

Positions 26–41 match the LIR motif; that stretch reads VSEEDEVDGWLIIDLQ. The tract at residues 41–68 is disordered; that stretch reads QDSYTAPPDPGASPAPAGRPPPAPSLMD. Positions 47–64 are enriched in pro residues; sequence PPDPGASPAPAGRPPPAP. Phosphoserine is present on S136. Residues 177-210 are disordered; sequence RQRAERHTLSAKVLQRQNRARESRSRRPKHQGSF.

Interacts with VMP1, GABARAP, GABARAPL1, GABARAPL2, MAP1LC3A, MAP1LC3B, MAP1LC3C and THRA.

Its subcellular location is the cytoplasm. It localises to the cytosol. The protein localises to the nucleus. The protein resides in the PML body. It is found in the cytoplasmic vesicle. Its subcellular location is the autophagosome. Functionally, dual regulator of transcription and autophagy. Positively regulates autophagy and is required for autophagosome formation and processing. May act as a scaffold protein that recruits MAP1LC3A, GABARAP and GABARAPL2 and brings them to the autophagosome membrane by interacting with VMP1 where, in cooperation with the BECN1-PI3-kinase class III complex, they trigger autophagosome development. Acts as a transcriptional activator of THRA. The chain is Tumor protein p53-inducible nuclear protein 2 (Tp53inp2) from Mus musculus (Mouse).